Here is a 93-residue protein sequence, read N- to C-terminus: Pyrimidine/purine nucleoside phosphorylase (93 aa).

The protein belongs to the nucleoside phosphorylase PpnP family.

It catalyses the reaction a purine D-ribonucleoside + phosphate = a purine nucleobase + alpha-D-ribose 1-phosphate. The catalysed reaction is adenosine + phosphate = alpha-D-ribose 1-phosphate + adenine. It carries out the reaction cytidine + phosphate = cytosine + alpha-D-ribose 1-phosphate. The enzyme catalyses guanosine + phosphate = alpha-D-ribose 1-phosphate + guanine. It catalyses the reaction inosine + phosphate = alpha-D-ribose 1-phosphate + hypoxanthine. The catalysed reaction is thymidine + phosphate = 2-deoxy-alpha-D-ribose 1-phosphate + thymine. It carries out the reaction uridine + phosphate = alpha-D-ribose 1-phosphate + uracil. The enzyme catalyses xanthosine + phosphate = alpha-D-ribose 1-phosphate + xanthine. Functionally, catalyzes the phosphorolysis of diverse nucleosides, yielding D-ribose 1-phosphate and the respective free bases. Can use uridine, adenosine, guanosine, cytidine, thymidine, inosine and xanthosine as substrates. Also catalyzes the reverse reactions. The sequence is that of Pyrimidine/purine nucleoside phosphorylase from Pseudomonas savastanoi pv. phaseolicola (strain 1448A / Race 6) (Pseudomonas syringae pv. phaseolicola (strain 1448A / Race 6)).